Consider the following 255-residue polypeptide: Reticulon-like protein B3 (255 aa).

Residues 1–25 (MAEEHKHEESIMEKISEKIHGHDDS) are compositionally biased toward basic and acidic residues. Residues 1–38 (MAEEHKHEESIMEKISEKIHGHDDSSSSSSDSDDDKNS) form a disordered region. Position 2 is an N-acetylalanine (A2). The Reticulon domain occupies 64-255 (PADIFLWRNK…GAFAFIKKKD (192 aa)). 3 helical membrane-spanning segments follow: residues 75–95 (VSGGVLGAATVSWILFELLEY), 97–117 (LLTLFGHISILALAVLFLWSS), and 186–206 (CNFLTLIYIATVLLFTIPVLY).

The protein resides in the endoplasmic reticulum membrane. It is found in the vacuole membrane. The polypeptide is Reticulon-like protein B3 (RTNLB3) (Arabidopsis thaliana (Mouse-ear cress)).